Reading from the N-terminus, the 1755-residue chain is Transposon Ty1-JR1 Gag-Pol polyprotein (1755 aa).

Residues 1–16 show a composition bias toward low complexity; it reads MESQQLSQHSHISHGS. Disordered stretches follow at residues 1 to 93, 126 to 173, and 352 to 421; these read MESQ…MMTQ, PQSQ…RPPP, and GSRN…SKST. Composition is skewed to polar residues over residues 48-60 and 127-152; these read TKANSQQTTTPAS and QSQFPQYPSSVGTPLSTPSPESGNTF. The span at 153–165 shows a compositional bias: low complexity; the sequence is TDSSSADSDMTST. An RNA-binding region spans residues 299–401; it reads NNGIHINNKV…NSKSKTARAH (103 aa). Positions 402 to 418 are enriched in low complexity; it reads NVSTSNNSPSTDNDSIS. Ser416 carries the post-translational modification Phosphoserine. The active-site For protease activity; shared with dimeric partner is Asp461. The interval 583–640 is integrase-type zinc finger-like; that stretch reads NVHTSESTRKYPYPFIHRMLAHANAQTIRYSLKNNTITYFNESDVDWSSAIDYQCPDC. Residues 660 to 835 form the Integrase catalytic domain; that stretch reads NSYEPFQYLH…AGLDISTLLP (176 aa). Positions 671 and 736 each coordinate Mg(2+). 3 disordered regions span residues 956–1087, 1092–1111, and 1130–1186; these read SKAV…ETEK, RSPSIDASPPENNSSHNIVP, and DLPL…EDNE. Low complexity predominate over residues 960–969; the sequence is SPTDSTPPST. Over residues 1005 to 1015 the composition is skewed to polar residues; it reads STPQISNIEST. Basic and acidic residues predominate over residues 1038–1053; that stretch reads ESSHASKSKDFRHSDS. Polar residues-rich tracts occupy residues 1054 to 1082 and 1101 to 1111; these read YSENETNHTNVPISSTGGTNNKTVPQISD and PENNSSHNIVP. The Bipartite nuclear localization signal signature appears at 1178-1212; that stretch reads KKRSLEDNETEIKVSRDTWNTKNMRSLEPPRSKKR. Positions 1338–1476 constitute a Reverse transcriptase Ty1/copia-type domain; that stretch reads NNYYITQLDI…DILGLEIKYQ (139 aa). Residues Asp1346, Asp1427, Asp1428, Asp1610, Glu1652, and Asp1685 each coordinate Mg(2+). Residues 1610 to 1752 enclose the RNase H Ty1/copia-type domain; it reads DASYGNQPYY…IKTFKLLTNK (143 aa).

As to quaternary structure, the capsid protein forms a homotrimer, from which the VLPs are assembled. The protease is a homodimer, whose active site consists of two apposed aspartic acid residues. In terms of processing, initially, virus-like particles (VLPs) are composed of the structural unprocessed proteins Gag and Gag-Pol, and also contain the host initiator methionine tRNA (tRNA(i)-Met) which serves as a primer for minus-strand DNA synthesis, and a dimer of genomic Ty RNA. Processing of the polyproteins occurs within the particle and proceeds by an ordered pathway, called maturation. First, the protease (PR) is released by autocatalytic cleavage of the Gag-Pol polyprotein yielding capsid protein p45 and a Pol-p154 precursor protein. This cleavage is a prerequisite for subsequent processing of Pol-p154 at the remaining sites to release the mature structural and catalytic proteins. Maturation takes place prior to the RT reaction and is required to produce transposition-competent VLPs.

Its subcellular location is the cytoplasm. The protein localises to the nucleus. The enzyme catalyses DNA(n) + a 2'-deoxyribonucleoside 5'-triphosphate = DNA(n+1) + diphosphate. The catalysed reaction is Endonucleolytic cleavage to 5'-phosphomonoester.. Its function is as follows. Capsid protein (CA) is the structural component of the virus-like particle (VLP), forming the shell that encapsulates the retrotransposons dimeric RNA genome. The particles are assembled from trimer-clustered units and there are holes in the capsid shells that allow for the diffusion of macromolecules. CA also has nucleocapsid-like chaperone activity, promoting primer tRNA(i)-Met annealing to the multipartite primer-binding site (PBS), dimerization of Ty1 RNA and initiation of reverse transcription. In terms of biological role, the aspartyl protease (PR) mediates the proteolytic cleavages of the Gag and Gag-Pol polyproteins after assembly of the VLP. Reverse transcriptase/ribonuclease H (RT) is a multifunctional enzyme that catalyzes the conversion of the retro-elements RNA genome into dsDNA within the VLP. The enzyme displays a DNA polymerase activity that can copy either DNA or RNA templates, and a ribonuclease H (RNase H) activity that cleaves the RNA strand of RNA-DNA heteroduplexes during plus-strand synthesis and hydrolyzes RNA primers. The conversion leads to a linear dsDNA copy of the retrotransposon that includes long terminal repeats (LTRs) at both ends. Functionally, integrase (IN) targets the VLP to the nucleus, where a subparticle preintegration complex (PIC) containing at least integrase and the newly synthesized dsDNA copy of the retrotransposon must transit the nuclear membrane. Once in the nucleus, integrase performs the integration of the dsDNA into the host genome. This Saccharomyces cerevisiae (strain ATCC 204508 / S288c) (Baker's yeast) protein is Transposon Ty1-JR1 Gag-Pol polyprotein (TY1B-JR1).